Consider the following 1617-residue polypeptide: MDGQRQQTYIPAPPPPSATQPSQSHMLSLPPPPPRHLPTQPQGVMPPPPPGPPPGPPPGPGYGASKLANSQLQQQNNLGWQHNWARQALSQGFLPPPPPPPMVPTNQAYGRQTSFSVPNADGPITSATYVPGSNTFGAGVGIPGFDAHTRPSYEAYGTMSGSDRIRGPVHHLYESSGGDGSAYKRDGTVPPTPSARTMPSSLALHDNAQESVASSLPGATAQNHQSQTGQTNEPTKSPSHRQNNSNTLLGGMSPSEAAVQWPLDRVLLWLAKNGFSRDWQETFKTLQIEGADFLDIGHGANGRGNFNKMHNEVFPQLAKECEASGTGWDKERELGEGKRMRRLIRQIHDDDSFDVGIPAQKRRESQAPSEGAPDTSPKLSHEPQSAGPHSGTIENSPNLRAPQLAQPHRHSVQMRSVTLPIPTTHDIASSDFSQTDGISSRSDFSRSVLVGLGVDHRRQSPSMSSDNGNLVAPFRSYEDSPKSGSPATQHATLNQGLSSSSTGDLSVKYEHSRGNSSDSTMGRRYYESRKGQETIRPSPQEMCSRQWTGETSSSYPKEHKGIFNFLKKRSKGGDSTHPSPEEPNLESPTSPVNLRQNGPHLPYTKPSFNASDMSLGERPSSASMSDHERLRGKPAQKGKKWSFVTLDGWNYRLVDITDMDSVETLRAAICHNLGIADWASAQIFLTEPGQSDHEEPLNDTMLALCRRTKSDSIGSLKLFVRGTHLQPVPNHVPNFAGLGVPLPDKHTASPTHHLPRKPLDDEALSRIPPQPQTGPASPQLGIRPQQPKTPAAKFPARDAPQHTEGMSPVEGDQQVGISPEPDKADLLARHEEHKREVERKQKAYLSSKGPPQPRNDSYGETGYRRAGVIDFDERRVSPYEDKKADTLVPLRKPPSAPQESYTLTRINSLRKKDGDRPRAQPAVQTHGLGAVLASMGRMTSAIGTPAPSVPTPTSAGGKQTNFGSFGSPTQGNTKSAPQSSPEKESLDNPGNPAEHRHTKSTAPEIPKPTLQSRKSYGPEFDFEETEVSFQRSPRPQDDSDEDSDDGLFAIPLSNNKASTKENDSGSGTSEAQKRTEKPALTVNTESRLRKGLSVSFRSPSATRESFADANGDSGGREGASFLMAASPEDERPTPRRDSFARGDIWASRPPVEGVIDNLDDFFPDIDLDAPYLDGQGVSPPSSPANRAPPENDLHKKENQPSSSYTGEMNANAGDTLGSNEPTLKPQGGDVVARRNINRSGGGLTRGKSIREVAKGANQASRSRSIHTGNQKSGEILRRKSTKMFGAKIMQIKPKPGSRLSQLDPIPQNNTPSGVPQRQPTFRIIRGQLIGKGTYGRVYLGINADNGEVLAVKQVEINPRLAGQDTDRVKEMVAAMDQEIDTMQHLEHPNIVQYLGCERGEFSISIYLEYISGGSIGSCLRKHGKFEESVVKSLTRQTLSGLAYLHDQGILHRDLKADNILLDLDGTCKISDFGISKKTDDIYGNDSSNSMQGSVFWMAPEVIQSQGQGYSAKVDIWSLGCVVLEMFAGRRPWSKEEAIGAIFKLGSLSQAPPIPDDVSMTISPAALAFMYDCFTVPYRDSSERPTAQTLLTRHPFCEEDPNYNFLDTELYAKIRHVL.

9 disordered regions span residues 1–73 (MDGQ…SQLQ), 167–199 (GPVH…RTMP), 211–253 (SVAS…GGMS), 345–399 (RQIH…SPNL), 455–555 (DHRR…SSSY), 568–633 (KRSK…LRGK), 739–820 (GVPL…ISPE), 832–1144 (EHKR…RGDI), and 1165–1277 (IDLD…EILR). The span at 19–28 (TQPSQSHMLS) shows a compositional bias: low complexity. Residues 44–60 (VMPPPPPGPPPGPPPGP) are compositionally biased toward pro residues. Positions 220–248 (TAQNHQSQTGQTNEPTKSPSHRQNNSNTL) are enriched in polar residues. Over residues 482-504 (KSGSPATQHATLNQGLSSSSTGD) the composition is skewed to polar residues. Residues 524–533 (RYYESRKGQE) are compositionally biased toward basic and acidic residues. Polar residues-rich tracts occupy residues 535–555 (IRPS…SSSY) and 586–596 (ESPTSPVNLRQ). Basic and acidic residues-rich tracts occupy residues 832 to 841 (EHKREVERKQ) and 871 to 885 (FDER…KKAD). Composition is skewed to polar residues over residues 897 to 907 (PQESYTLTRIN) and 956 to 980 (GGKQ…PQSS). Composition is skewed to basic and acidic residues over residues 1128–1140 (EDER…DSFA) and 1189–1198 (PENDLHKKEN). 2 stretches are compositionally biased toward polar residues: residues 1199-1208 (QPSSSYTGEM) and 1257-1272 (NQAS…NQKS). The 274-residue stretch at 1323–1596 (IIRGQLIGKG…QTLLTRHPFC (274 aa)) folds into the Protein kinase domain. ATP-binding positions include 1329–1337 (IGKGTYGRV) and Lys1352.

This sequence belongs to the protein kinase superfamily. STE Ser/Thr protein kinase family. MAP kinase kinase kinase subfamily.

It carries out the reaction L-seryl-[protein] + ATP = O-phospho-L-seryl-[protein] + ADP + H(+). The enzyme catalyses L-threonyl-[protein] + ATP = O-phospho-L-threonyl-[protein] + ADP + H(+). Its function is as follows. Mitogen-activated protein kinase kinase kinase; part of cell wall integrity (CWI) signaling pathway composed of pkcA, the bck1-mkk2-mpka MAPK cascade and the downstream rlmA transcription regulator. The CWI signaling pathway regulates cell wall integrity and pyomelanin formation. CWI also controls oxidative stress response, gliotoxin production, iron adaptation and asexual development. Finally, CWI is constitutively required for A.fumigatus to cope with the temperature increase found in the mammalian lung environment, during infection. This chain is Mitogen-activated protein kinase kinae kinase bck1, found in Aspergillus fumigatus (strain ATCC MYA-4609 / CBS 101355 / FGSC A1100 / Af293) (Neosartorya fumigata).